Consider the following 515-residue polypeptide: ATP synthase subunit alpha (515 aa).

169–176 (GDRQTGKT) serves as a coordination point for ATP.

Belongs to the ATPase alpha/beta chains family. In terms of assembly, F-type ATPases have 2 components, CF(1) - the catalytic core - and CF(0) - the membrane proton channel. CF(1) has five subunits: alpha(3), beta(3), gamma(1), delta(1), epsilon(1). CF(0) has three main subunits: a(1), b(2) and c(9-12). The alpha and beta chains form an alternating ring which encloses part of the gamma chain. CF(1) is attached to CF(0) by a central stalk formed by the gamma and epsilon chains, while a peripheral stalk is formed by the delta and b chains.

It is found in the cell inner membrane. It carries out the reaction ATP + H2O + 4 H(+)(in) = ADP + phosphate + 5 H(+)(out). In terms of biological role, produces ATP from ADP in the presence of a proton gradient across the membrane. The alpha chain is a regulatory subunit. This Myxococcus xanthus protein is ATP synthase subunit alpha.